A 78-amino-acid chain; its full sequence is MSKENLNIDRINELARKKKEHGLTNEEAKEQTKLRRQYLEEFRKGFKQQIENTKVIDPEGNDVTPEKLKKIQEEKHNK.

Residues 53–78 are disordered; sequence TKVIDPEGNDVTPEKLKKIQEEKHNK. A compositionally biased stretch (basic and acidic residues) spans 64-78; that stretch reads TPEKLKKIQEEKHNK.

The protein belongs to the UPF0291 family.

It localises to the cytoplasm. This Staphylococcus epidermidis (strain ATCC 12228 / FDA PCI 1200) protein is UPF0291 protein SE_1024.